Here is a 254-residue protein sequence, read N- to C-terminus: Probable transcriptional regulatory protein Cyan7425_4347 (254 aa).

The protein belongs to the TACO1 family.

Its subcellular location is the cytoplasm. The sequence is that of Probable transcriptional regulatory protein Cyan7425_4347 from Cyanothece sp. (strain PCC 7425 / ATCC 29141).